The sequence spans 440 residues: GTPase Obg (440 aa).

The Obg domain maps to 5-163 (STFVDQTKIE…RTLRLELKVL (159 aa)). Positions 164 to 338 (ADVGLVGFPS…LMSRAADLVS (175 aa)) constitute an OBG-type G domain. GTP contacts are provided by residues 170-177 (GFPSVGKS), 195-199 (FTTLK), 217-220 (DLPG), 288-291 (SQMD), and 319-321 (SSV). Positions 177 and 197 each coordinate Mg(2+). Residues 362 to 440 (YHRPEKMEFT…IGDFSFEFVQ (79 aa)) enclose the OCT domain.

It belongs to the TRAFAC class OBG-HflX-like GTPase superfamily. OBG GTPase family. Monomer. Mg(2+) is required as a cofactor.

The protein resides in the cytoplasm. Its function is as follows. An essential GTPase which binds GTP, GDP and possibly (p)ppGpp with moderate affinity, with high nucleotide exchange rates and a fairly low GTP hydrolysis rate. Plays a role in control of the cell cycle, stress response, ribosome biogenesis and in those bacteria that undergo differentiation, in morphogenesis control. This is GTPase Obg from Lactobacillus delbrueckii subsp. bulgaricus (strain ATCC BAA-365 / Lb-18).